Reading from the N-terminus, the 156-residue chain is ATP synthase subunit b (156 aa).

The helical transmembrane segment at 7 to 29 (LIAQAISFAILIWFTTKFVWPYL) threads the bilayer.

This sequence belongs to the ATPase B chain family. In terms of assembly, F-type ATPases have 2 components, F(1) - the catalytic core - and F(0) - the membrane proton channel. F(1) has five subunits: alpha(3), beta(3), gamma(1), delta(1), epsilon(1). F(0) has three main subunits: a(1), b(2) and c(10-14). The alpha and beta chains form an alternating ring which encloses part of the gamma chain. F(1) is attached to F(0) by a central stalk formed by the gamma and epsilon chains, while a peripheral stalk is formed by the delta and b chains.

Its subcellular location is the cell inner membrane. Functionally, f(1)F(0) ATP synthase produces ATP from ADP in the presence of a proton or sodium gradient. F-type ATPases consist of two structural domains, F(1) containing the extramembraneous catalytic core and F(0) containing the membrane proton channel, linked together by a central stalk and a peripheral stalk. During catalysis, ATP synthesis in the catalytic domain of F(1) is coupled via a rotary mechanism of the central stalk subunits to proton translocation. In terms of biological role, component of the F(0) channel, it forms part of the peripheral stalk, linking F(1) to F(0). This chain is ATP synthase subunit b, found in Methylobacillus flagellatus (strain ATCC 51484 / DSM 6875 / VKM B-1610 / KT).